The sequence spans 152 residues: Large ribosomal subunit protein bL9 (152 aa).

The protein belongs to the bacterial ribosomal protein bL9 family.

Functionally, binds to the 23S rRNA. In Synechococcus sp. (strain WH7803), this protein is Large ribosomal subunit protein bL9.